Consider the following 307-residue polypeptide: Elongation factor Ts (307 aa).

The interval 80 to 83 (TDFV) is involved in Mg(2+) ion dislocation from EF-Tu.

Belongs to the EF-Ts family.

It is found in the cytoplasm. Its function is as follows. Associates with the EF-Tu.GDP complex and induces the exchange of GDP to GTP. It remains bound to the aminoacyl-tRNA.EF-Tu.GTP complex up to the GTP hydrolysis stage on the ribosome. This is Elongation factor Ts from Bradyrhizobium diazoefficiens (strain JCM 10833 / BCRC 13528 / IAM 13628 / NBRC 14792 / USDA 110).